The sequence spans 612 residues: Elongation factor 4 (612 aa).

A tr-type G domain is found at 11-193 (KHIRNFSIVA…RIVTDISAPT (183 aa)). GTP-binding positions include 23–28 (DHGKST) and 140–143 (NKID).

The protein belongs to the TRAFAC class translation factor GTPase superfamily. Classic translation factor GTPase family. LepA subfamily.

Its subcellular location is the cell membrane. The enzyme catalyses GTP + H2O = GDP + phosphate + H(+). Required for accurate and efficient protein synthesis under certain stress conditions. May act as a fidelity factor of the translation reaction, by catalyzing a one-codon backward translocation of tRNAs on improperly translocated ribosomes. Back-translocation proceeds from a post-translocation (POST) complex to a pre-translocation (PRE) complex, thus giving elongation factor G a second chance to translocate the tRNAs correctly. Binds to ribosomes in a GTP-dependent manner. This is Elongation factor 4 from Lactobacillus delbrueckii subsp. bulgaricus (strain ATCC 11842 / DSM 20081 / BCRC 10696 / JCM 1002 / NBRC 13953 / NCIMB 11778 / NCTC 12712 / WDCM 00102 / Lb 14).